The primary structure comprises 233 residues: Glucosamine-6-phosphate deaminase (233 aa).

The Proton acceptor; for enolization step role is filled by D62. The active-site For ring-opening step is N128. H130 acts as the Proton acceptor; for ring-opening step in catalysis. Catalysis depends on E135, which acts as the For ring-opening step.

Belongs to the glucosamine/galactosamine-6-phosphate isomerase family. NagB subfamily.

It catalyses the reaction alpha-D-glucosamine 6-phosphate + H2O = beta-D-fructose 6-phosphate + NH4(+). Its pathway is amino-sugar metabolism; N-acetylneuraminate degradation; D-fructose 6-phosphate from N-acetylneuraminate: step 5/5. Functionally, catalyzes the reversible isomerization-deamination of glucosamine 6-phosphate (GlcN6P) to form fructose 6-phosphate (Fru6P) and ammonium ion. In Enterococcus faecalis (strain ATCC 700802 / V583), this protein is Glucosamine-6-phosphate deaminase.